Here is a 78-residue protein sequence, read N- to C-terminus: DNA-directed RNA polymerase subunit omega (78 aa).

Belongs to the RNA polymerase subunit omega family. As to quaternary structure, in cyanobacteria the RNAP catalytic core is composed of 2 alpha, 1 beta, 1 beta', 1 gamma and 1 omega subunit. When a sigma factor is associated with the core the holoenzyme is formed, which can initiate transcription.

It carries out the reaction RNA(n) + a ribonucleoside 5'-triphosphate = RNA(n+1) + diphosphate. Functionally, promotes RNA polymerase assembly. Latches the N- and C-terminal regions of the beta' subunit thereby facilitating its interaction with the beta and alpha subunits. The polypeptide is DNA-directed RNA polymerase subunit omega (Prochlorococcus marinus subsp. pastoris (strain CCMP1986 / NIES-2087 / MED4)).